The sequence spans 62 residues: Large ribosomal subunit protein uL30 (62 aa).

This sequence belongs to the universal ribosomal protein uL30 family. In terms of assembly, part of the 50S ribosomal subunit.

This Shewanella frigidimarina (strain NCIMB 400) protein is Large ribosomal subunit protein uL30.